Consider the following 245-residue polypeptide: Flavin-dependent thymidylate synthase (245 aa).

Residues 6–220 (PRVELLAHTP…PELFAHAGAK (215 aa)) enclose the ThyX domain. FAD is bound by residues S65, 89–91 (RHR), and Q97. DUMP contacts are provided by residues 86-89 (QLVR), 97-101 (QQSQR), and R159. Residues 89-99 (RHRIASFSQQS) carry the ThyX motif motif. Residues 175-177 (NCR) and H181 contribute to the FAD site. R186 is a dUMP binding site. Catalysis depends on R186, which acts as the Involved in ionization of N3 of dUMP, leading to its activation.

This sequence belongs to the thymidylate synthase ThyX family. In terms of assembly, homotetramer. FAD is required as a cofactor.

It carries out the reaction dUMP + (6R)-5,10-methylene-5,6,7,8-tetrahydrofolate + NADPH + H(+) = dTMP + (6S)-5,6,7,8-tetrahydrofolate + NADP(+). The protein operates within pyrimidine metabolism; dTTP biosynthesis. Its function is as follows. Catalyzes the reductive methylation of 2'-deoxyuridine-5'-monophosphate (dUMP) to 2'-deoxythymidine-5'-monophosphate (dTMP) while utilizing 5,10-methylenetetrahydrofolate (mTHF) as the methyl donor, and NADPH and FADH(2) as the reductant. The sequence is that of Flavin-dependent thymidylate synthase from Nitratidesulfovibrio vulgaris (strain ATCC 29579 / DSM 644 / CCUG 34227 / NCIMB 8303 / VKM B-1760 / Hildenborough) (Desulfovibrio vulgaris).